The primary structure comprises 440 residues: Serine protease inhibitor A3G (440 aa).

The tract at residues 357-382 (GTEAAAATGMAGVGCCAVFDFLEIFF) is RCL.

It belongs to the serpin family. As to expression, expressed in bone marrow (particularly hematopoietic stem cells), heart, kidney, liver, lung, skeletal muscle, spleen, testis, thymus and T-cells.

Its subcellular location is the cytoplasm. The protein resides in the nucleus. Functionally, serine and cysteine protease inhibitor. Can inhibit lysosomal papain-like proteases including the cathepsins B, G, H, K, L and V. Ineffective against elastase, granzyme A, granzyme B, or caspases 3, 8 or 9. Inhibition of cytoplasmic cathepsin B following release from the lysosome may protect cells from apoptosis. This may facilitate the survival of progenitor T-cells and the subsequent development of long term memory CD8 T-cells. The protein is Serine protease inhibitor A3G (Serpina3g) of Mus musculus (Mouse).